The following is a 130-amino-acid chain: Sec-independent protein translocase protein TatB (130 aa).

Residues 2-22 (FANIGWGEMLVLVVVGLVVLG) traverse the membrane as a helical segment. The disordered stretch occupies residues 108-130 (DAVASAQEAPDEPVRPPFDSDAT).

The protein belongs to the TatB family. As to quaternary structure, the Tat system comprises two distinct complexes: a TatABC complex, containing multiple copies of TatA, TatB and TatC subunits, and a separate TatA complex, containing only TatA subunits. Substrates initially bind to the TatABC complex, which probably triggers association of the separate TatA complex to form the active translocon.

It is found in the cell membrane. Functionally, part of the twin-arginine translocation (Tat) system that transports large folded proteins containing a characteristic twin-arginine motif in their signal peptide across membranes. Together with TatC, TatB is part of a receptor directly interacting with Tat signal peptides. TatB may form an oligomeric binding site that transiently accommodates folded Tat precursor proteins before their translocation. This Mycobacterium ulcerans (strain Agy99) protein is Sec-independent protein translocase protein TatB.